A 172-amino-acid chain; its full sequence is 3-hydroxydecanoyl-[acyl-carrier-protein] dehydratase (172 aa).

His-71 is an active-site residue.

Belongs to the thioester dehydratase family. FabA subfamily. Homodimer.

The protein localises to the cytoplasm. The catalysed reaction is a (3R)-hydroxyacyl-[ACP] = a (2E)-enoyl-[ACP] + H2O. It carries out the reaction (3R)-hydroxydecanoyl-[ACP] = (2E)-decenoyl-[ACP] + H2O. It catalyses the reaction (2E)-decenoyl-[ACP] = (3Z)-decenoyl-[ACP]. It participates in lipid metabolism; fatty acid biosynthesis. Functionally, necessary for the introduction of cis unsaturation into fatty acids. Catalyzes the dehydration of (3R)-3-hydroxydecanoyl-ACP to E-(2)-decenoyl-ACP and then its isomerization to Z-(3)-decenoyl-ACP. Can catalyze the dehydratase reaction for beta-hydroxyacyl-ACPs with saturated chain lengths up to 16:0, being most active on intermediate chain length. The chain is 3-hydroxydecanoyl-[acyl-carrier-protein] dehydratase from Escherichia coli O139:H28 (strain E24377A / ETEC).